The primary structure comprises 99 residues: Nucleoid-associated protein SAG1747 (99 aa).

Low complexity predominate over residues 1–10 (MMNMQNMMRQ). The segment at 1 to 20 (MMNMQNMMRQAQKLQKQMEQ) is disordered.

The protein belongs to the YbaB/EbfC family. In terms of assembly, homodimer.

The protein resides in the cytoplasm. It is found in the nucleoid. In terms of biological role, binds to DNA and alters its conformation. May be involved in regulation of gene expression, nucleoid organization and DNA protection. This Streptococcus agalactiae serotype V (strain ATCC BAA-611 / 2603 V/R) protein is Nucleoid-associated protein SAG1747.